Here is a 438-residue protein sequence, read N- to C-terminus: Acyl-CoA dehydrogenase apdG (438 aa).

Belongs to the acyl-CoA dehydrogenase family. Requires FAD as cofactor.

Its pathway is secondary metabolite biosynthesis. In terms of biological role, acyl-CoA dehydrogenase; part of the gene cluster that mediates the biosynthesis of aspyridones. The polyketide-amino acid backbone preaspyridone A is first assembled by the PKS-NRPS hybrid apdA. The assembly of preaspyridone A is initiated by loading of malonyl-CoA onto apdA, followed by decarboxylation to yield the acetyl starter unit. The growing polyketide chain then elongates into a tetraketide. The adpA PKS module catalyzes three Claisen condensations, as well as beta-keto processing and methylation. Alpha-methylation step during polyketide synthesis is a prerequisite and a key checkpoint for chain transfer between PKS and NRPS modules. The downstream NRPS module contains the condensation (C), adenylation (A), and thiolation (T) domains and catalyzes the incorporation of tyrosine via the formation of the L-tyrosinyl-thioester and the amide linkage between L-tyrosinyl-thioester and the tetraketide. The bimodular assembly line is terminated with a reductase (R) domain that facilitates formation and release of the tetramic acid product. Because apdA lacks a designated enoylreductase (ER) domain, the required activity is provided the enoyl reductase apdC. ApdC appears to operate with different stereoselectivity in different PKS cycle. Combined with apdC, apdA is proposed to synthesize preaspyridone A via about 20 enzymatic steps. A number of oxidative steps performed successively by the cytochrome P450 monooxygenases apdE and apdB are required for the conversion of preaspyridone A to aspyridone A. The cytochrome P450 monooxygenase apdE is responsible for the oxidative dephenylation of preaspyridone A. Finally, the predicted FAD-dependent monooxygenase apdD and the acyl-CoA dehydrogenase apdG may be involved in the transformation of aspyridone A into aspyridone B. This chain is Acyl-CoA dehydrogenase apdG, found in Emericella nidulans (strain FGSC A4 / ATCC 38163 / CBS 112.46 / NRRL 194 / M139) (Aspergillus nidulans).